The chain runs to 317 residues: Pseudouridine-5'-phosphate glycosidase 1 (317 aa).

The active-site Proton donor is the Glu-40. 2 residues coordinate substrate: Lys-101 and Val-121. Position 153 (Asp-153) interacts with Mn(2+). 155-157 (SAD) contacts substrate. The active-site Nucleophile is Lys-174.

This sequence belongs to the pseudouridine-5'-phosphate glycosidase family. As to quaternary structure, homotrimer. Requires Mn(2+) as cofactor.

It catalyses the reaction D-ribose 5-phosphate + uracil = psi-UMP + H2O. Catalyzes the reversible cleavage of pseudouridine 5'-phosphate (PsiMP) to ribose 5-phosphate and uracil. Functions biologically in the cleavage direction, as part of a pseudouridine degradation pathway. The chain is Pseudouridine-5'-phosphate glycosidase 1 from Rhizobium johnstonii (strain DSM 114642 / LMG 32736 / 3841) (Rhizobium leguminosarum bv. viciae).